Reading from the N-terminus, the 269-residue chain is Probable cytochrome c oxidase subunit 2 (269 aa).

The next 3 helical transmembrane spans lie at 8 to 28 (ITLI…PLPW), 50 to 70 (LLYI…FVCI), and 87 to 107 (ILIE…IAVP). Cu cation-binding residues include His-189, Cys-224, Cys-228, and His-232.

Belongs to the cytochrome c oxidase subunit 2 family. It depends on Cu cation as a cofactor. Heme is required as a cofactor.

Its subcellular location is the cell membrane. The catalysed reaction is 4 Fe(II)-[cytochrome c] + O2 + 8 H(+)(in) = 4 Fe(III)-[cytochrome c] + 2 H2O + 4 H(+)(out). Its function is as follows. Subunits I and II form the functional core of the enzyme complex. Electrons originating in cytochrome c are transferred via heme a and Cu(A) to the binuclear center formed by heme a3 and Cu(B). The sequence is that of Probable cytochrome c oxidase subunit 2 (ctaC) from Rickettsia bellii (strain RML369-C).